The following is a 418-amino-acid chain: FAD-dependent monooxygenase fmqB (418 aa).

V12 and R68 together coordinate FAD. R147 is an active-site residue. D272 and G285 together coordinate FAD.

Belongs to the paxM FAD-dependent monooxygenase family.

The protein localises to the cytoplasm. It participates in alkaloid biosynthesis. Its function is as follows. FAD-dependent monooxygenase; part of the gene cluster that mediates the biosynthesis of the antitumor fumiquinazolines that confer a dual-usage capability to defend against phagocytes in the environment and animal hosts. The simplest member is fumiquinazoline F (FQF) with a 6-6-6 tricyclic core derived from anthranilic acid (Ant), tryptophan (Trp), and alanine (Ala). The trimodular NRPS fmqA is responsible for FQF formation. Modules 1, 2 and 3 of fmqA are predicted to activate and load Ant, Trp and Ala, respectively, providing for the assembly of an Ant-Trp-Ala-S-enzyme intermediate that would undergo double cyclization for chain release and generation of the tricyclic 6-6-6 product fumiquinazoline F. The presence of an E domain predicted for module 2 of fmqA is consistent with epimerization of L-Trp to D-Trp during assembly to generate the R-stereocenter at C14 of FQF. The FAD-dependent monooxygenase fmqB and the monomodular NRPS fmqC then maturate FQF to FQA. FmqB oxidizes the 2',3'-double bond of the indole side chain of FQF, and fmqC activates L-Ala as the adenylate, installs it as the pantetheinyl thioester on its carrier protein domain, and acylates the oxidized indole for subsequent intramolecular cyclization to create the 6-5-5-imidazolindolone of FQA. The FAD-linked oxidoreductase fmqD introduces a third layer of scaffold complexity by converting FQA to the spirohemiaminal FQC, presumably by catalyzing the formation of a transient imine within the pyrazinone ring. FQC subsequently converts nonenzymatically to the known cyclic aminal FQD. This is FAD-dependent monooxygenase fmqB from Aspergillus fumigatus (strain ATCC MYA-4609 / CBS 101355 / FGSC A1100 / Af293) (Neosartorya fumigata).